Reading from the N-terminus, the 211-residue chain is tRNA (guanine-N(7)-)-methyltransferase (211 aa).

4 residues coordinate S-adenosyl-L-methionine: Asp40, Glu65, Asn92, and Asp118. The active site involves Asp118. Residues Lys122 and Asp154 each coordinate substrate.

It belongs to the class I-like SAM-binding methyltransferase superfamily. TrmB family.

It carries out the reaction guanosine(46) in tRNA + S-adenosyl-L-methionine = N(7)-methylguanosine(46) in tRNA + S-adenosyl-L-homocysteine. The protein operates within tRNA modification; N(7)-methylguanine-tRNA biosynthesis. In terms of biological role, catalyzes the formation of N(7)-methylguanine at position 46 (m7G46) in tRNA. The sequence is that of tRNA (guanine-N(7)-)-methyltransferase from Microcystis aeruginosa (strain NIES-843 / IAM M-2473).